Consider the following 63-residue polypeptide: Omega-conotoxin Eu1.6 (63 aa).

The signal sequence occupies residues 1-21 (MGMRMMFTVFLLVVLATTVVS). Positions 22-47 (FTSDRAPDGRNAAAKAFGLITPTVRK) are excised as a propeptide. 2 cysteine pairs are disulfide-bonded: C49/C55 and C50/C63. Residues 51-53 (SNP) form a ser-Xaa-Pro motif, crucial for potent interaction with nAChR region.

It belongs to the conotoxin A superfamily. As to expression, expressed by the venom duct.

The protein localises to the secreted. This amidated peptide potently and teversibly inhibits Cav2.2/CACNA1B. Steady-state inactivation is enhanced at hyperpolarized membrane potentials. Also shows a weak interaction at alpha-3-beta-4/ CHRNA3-CHRNB4 and alpha-7/CHRNA7 nAChRs subtypes. In vivo, exhibits a potent analgesic activity in rat partial sciatic nerve injury and chronic constriction injury models. The polypeptide is Omega-conotoxin Eu1.6 (Conus eburneus (Ivory cone)).